A 359-amino-acid chain; its full sequence is DNA polymerase IV (359 aa).

The 181-residue stretch at 4-184 folds into the UmuC domain; the sequence is IVHVDMDAFY…LKVNRIPGVG (181 aa). 2 residues coordinate Mg(2+): aspartate 8 and aspartate 102. Residue glutamate 103 is part of the active site.

This sequence belongs to the DNA polymerase type-Y family. In terms of assembly, monomer. Mg(2+) is required as a cofactor.

Its subcellular location is the cytoplasm. It carries out the reaction DNA(n) + a 2'-deoxyribonucleoside 5'-triphosphate = DNA(n+1) + diphosphate. Functionally, poorly processive, error-prone DNA polymerase involved in untargeted mutagenesis. Copies undamaged DNA at stalled replication forks, which arise in vivo from mismatched or misaligned primer ends. These misaligned primers can be extended by PolIV. Exhibits no 3'-5' exonuclease (proofreading) activity. May be involved in translesional synthesis, in conjunction with the beta clamp from PolIII. In Xanthomonas oryzae pv. oryzae (strain MAFF 311018), this protein is DNA polymerase IV.